Reading from the N-terminus, the 891-residue chain is DNA mismatch repair protein MutS (891 aa).

646 to 653 (GPNMAGKS) serves as a coordination point for ATP.

It belongs to the DNA mismatch repair MutS family.

Functionally, this protein is involved in the repair of mismatches in DNA. It is possible that it carries out the mismatch recognition step. This protein has a weak ATPase activity. This is DNA mismatch repair protein MutS from Rickettsia canadensis (strain McKiel).